The primary structure comprises 734 residues: MALRFPRFSQGLAQDPTTRRIWFGIATAHDFESHDDITEERLYQNIFASHFGQLAIIFLWTSGNLFHVAWQGNFESWVQDPLHVRPIAHAIWDPHFGQPAVEAFTRGGALGPVNIAYSGVYQWWYTIGLRTNEDLYTGALFLLFLSVISLLGGWLHLQPKWKPSVSWFKNAESRLNHHLSGLFGVSSLAWTGHLVHVAIPGSRGEYVRWNNFLDVLPHPQGLGPLFTGQWNLYAQNPDSSSHLFGTSQGAGTAILTLLGGFHPQTQSLWLTDMAHHHLAIAFVFLVAGHMYRTNFGIGHSMKDLLEAHIPPGGRLGRGHKGLYDTINNSLHFQLGLALASLGVITSLVAQHMYSLPAYAFIAQDFTTQAALYTHHQYIAGFIMTGAFAHGAIFFIRDYNPEQNEDNVLARMLDHKEAIISHLSWASLFLGFHTLGLYVHNDVMLAFGTPEKQILIEPIFAQWIQSAHGKTSYGFDVLLSSTSGPAFNAGRSIWLPGWLNAVNENSNSLFLTIGPGDFLVHHAIALGLHTTTLILVKGALDARGSKLMPDKKDFGYSFPCDGPGRGGTCDISAWDAFYLAVFWMLNTIGWVTFYWHWKHITLWQGNVSQFNESSTYLMGWLRDYLWLNSSQLINGYNPFGMNSLSVWAWMFLFGHLVWATGFMFLISWRGYWQELIETLAWAHERTPLANLIRWRDKPVALSIVQARLVGLAHFSVGYIFTYAAFLIASTSGKFG.

The next 8 membrane-spanning stretches (helical) occupy residues I46–A69, L135–Q158, L175–I199, M273–Y291, L330–Y353, A369–I395, A417–H439, and F517–V535. The [4Fe-4S] cluster site is built by C559 and C568. 2 helical membrane-spanning segments follow: residues A575 to W596 and L643 to I665. Residues H654, M662, and Y670 each coordinate chlorophyll a. W671 lines the phylloquinone pocket. A helical transmembrane segment spans residues L707–A727.

The protein belongs to the PsaA/PsaB family. As to quaternary structure, the PsaA/B heterodimer binds the P700 chlorophyll special pair and subsequent electron acceptors. PSI consists of a core antenna complex that captures photons, and an electron transfer chain that converts photonic excitation into a charge separation. The eukaryotic PSI reaction center is composed of at least 11 subunits. Requires P700 is a chlorophyll a/chlorophyll a' dimer, A0 is one or more chlorophyll a, A1 is one or both phylloquinones and FX is a shared 4Fe-4S iron-sulfur center. as cofactor.

It localises to the plastid. It is found in the chloroplast thylakoid membrane. The enzyme catalyses reduced [plastocyanin] + hnu + oxidized [2Fe-2S]-[ferredoxin] = oxidized [plastocyanin] + reduced [2Fe-2S]-[ferredoxin]. In terms of biological role, psaA and PsaB bind P700, the primary electron donor of photosystem I (PSI), as well as the electron acceptors A0, A1 and FX. PSI is a plastocyanin-ferredoxin oxidoreductase, converting photonic excitation into a charge separation, which transfers an electron from the donor P700 chlorophyll pair to the spectroscopically characterized acceptors A0, A1, FX, FA and FB in turn. Oxidized P700 is reduced on the lumenal side of the thylakoid membrane by plastocyanin. The chain is Photosystem I P700 chlorophyll a apoprotein A2 from Spinacia oleracea (Spinach).